Consider the following 281-residue polypeptide: MNLLLAEVAQATQRLADAGVPSPRTDAEELAAYLHGVKRGELHTVPDADFDARYWEVVARREAREPLQHITGRAYFRYLELQVGPGVFVPRPETESVVGWAIDAVRAMDVVEPCIVDLCTGSGAIALALAQEVPRSRVHAVELSEDALKWTRRNMEGSRVDLRQGDALTAFPDLDGQVDLVVSNPPYIPLTEWEYVAPEARDHDPELALFSGEDGLDLIRGLERTAHRLLRPGGVVVVEHADTQGGQVPWIFTEERGWADAADHPDLNNRPRFATARKALP.

2 residues coordinate S-adenosyl-L-methionine: Glu142 and Asn184. 184 to 187 is a binding site for substrate; that stretch reads NPPY. Positions 261–281 are disordered; that stretch reads AADHPDLNNRPRFATARKALP.

The protein belongs to the protein N5-glutamine methyltransferase family. PrmC subfamily.

It carries out the reaction L-glutaminyl-[peptide chain release factor] + S-adenosyl-L-methionine = N(5)-methyl-L-glutaminyl-[peptide chain release factor] + S-adenosyl-L-homocysteine + H(+). Its function is as follows. Methylates the class 1 translation termination release factors RF1/PrfA and RF2/PrfB on the glutamine residue of the universally conserved GGQ motif. The chain is Release factor glutamine methyltransferase from Streptomyces coelicolor (strain ATCC BAA-471 / A3(2) / M145).